The chain runs to 66 residues: Large ribosomal subunit protein bL33c (66 aa).

The protein belongs to the bacterial ribosomal protein bL33 family.

Its subcellular location is the plastid. It is found in the chloroplast. This chain is Large ribosomal subunit protein bL33c, found in Fagopyrum esculentum subsp. ancestrale (Wild buckwheat).